The chain runs to 631 residues: ATP-dependent RNA helicase mrh4, mitochondrial (631 aa).

The transit peptide at 1–39 (MYPLGRVSLPVRSPVCLFCQNRTSSLLPSAYVWQSARTM) directs the protein to the mitochondrion. The tract at residues 55–111 (PNVAKTSLKKKRNDTDRFGPFAGMNQTEARIRDDPRSRSPASLKRSKAPSDESGRKD) is disordered. Residues 102–111 (APSDESGRKD) are compositionally biased toward basic and acidic residues. Positions 143 to 176 (TSFDQFPLLPVVRHSIFSQALPGLHDVTPTPIQR) match the Q motif motif. Residues 181–200 (RLLDDTNKDKKPKKRAEGEP) form a disordered region. Positions 196-408 (AEGEPEYDQY…RKKYPDIQRL (213 aa)) constitute a Helicase ATP-binding domain. 209 to 216 (AETGSGKT) lines the ATP pocket. The DEAD box motif lies at 355–358 (DEAD). The region spanning 442–631 (DVIWSIGKAG…EGMFRGQALI (190 aa)) is the Helicase C-terminal domain.

It belongs to the DEAD box helicase family. MRH4 subfamily.

It is found in the mitochondrion. The enzyme catalyses ATP + H2O = ADP + phosphate + H(+). Functionally, ATP-binding RNA helicase involved in mitochondrial RNA metabolism. Required for maintenance of mitochondrial DNA. This is ATP-dependent RNA helicase mrh4, mitochondrial (mrh4) from Aspergillus terreus (strain NIH 2624 / FGSC A1156).